The following is a 353-amino-acid chain: MACCLSEEAKEQKRINCEIEKELRKAKRDARRELKLLLLGTGESGKSTFIKQMRIIHGTGYSEEDKRGFIKIVYQNIFMAMHSMIRAMDTIKISFEVADNEENAIMIRQVDYETVTTLDSQSVEAILSLWADAGIQECYDRRREYQLTDSAKYYLDAVDRIAEPNYLPTLQDILRVRVPTTGIIEYPFDLDSIIFRMVDVGGQRSERRKWIHCFENVTSIMFLVALSEYDQVLVESDNENRMEESKALFRTIITYPWFQNSSVILFLNKKDLLEEKIMHSHLVDYFPEFDGQKKDAQGAREFILRMFVDLNPDPDKIIYSHFTCATDTENIRFVFAAVKDTILQLNLKEYNLV.

Residues Cys-3 and Cys-4 are each lipidated (S-palmitoyl cysteine). Residues 32 to 353 (RELKLLLLGT…QLNLKEYNLV (322 aa)) enclose the G-alpha domain. Residues 35 to 48 (KLLLLGTGESGKST) are G1 motif. GTP contacts are provided by residues 40-47 (GTGESGKS), 174-180 (LRVRVPT), 199-203 (DVGGQ), 268-271 (NKKD), and Ala-325. Residues Ser-47 and Thr-180 each contribute to the Mg(2+) site. Residues 172-180 (DILRVRVPT) form a G2 motif region. Residues 195 to 204 (FRMVDVGGQR) are G3 motif. Positions 264 to 271 (ILFLNKKD) are G4 motif. A G5 motif region spans residues 323–328 (TCATDT).

The protein belongs to the G-alpha family. G(q) subfamily. In terms of assembly, g proteins are composed of 3 units; alpha, beta and gamma. The alpha chain contains the guanine nucleotide binding site.

Guanine nucleotide-binding proteins (G proteins) are involved as modulators or transducers in various transmembrane signaling systems. This Mizuhopecten yessoensis (Japanese scallop) protein is Guanine nucleotide-binding protein G(q) subunit alpha (SCGQA).